A 308-amino-acid polypeptide reads, in one-letter code: MDASGASSFLRGRCLESCFKASFGMSQPKDAAGQPSRRPADADDFVDDDRWITVILSVVRIAACFLSMMVTTIVWNMIMLILLPWPYARIRQGNLYGHVTGRMLMWILGNPITIEGSEFSNTRAIYICNHASLVDIFLIMWLIPKGTVTIAKKEIIWYPLFGQLYVLANHQRIDRSNPSAAIESIKEVARAVVKKNLSLIIFPEGTRSKTGRLLPFKKGFIHIALQTRLPIVPMVLTGTHLAWRKNSLRVRPAPITVKYFSPIKTDDWEEEKINHYVEMIHALYVDHLPESQKPLVSKGRDASGRSNS.

3 helical membrane-spanning segments follow: residues 65-85, 124-144, and 148-168; these read FLSMMVTTIVWNMIMLILLPW, AIYICNHASLVDIFLIMWLIP, and VTIAKKEIIWYPLFGQLYVLA. The HXXXXD motif signature appears at 130–135; that stretch reads HASLVD.

This sequence belongs to the 1-acyl-sn-glycerol-3-phosphate acyltransferase family.

It is found in the membrane. It carries out the reaction a 1-acyl-sn-glycero-3-phosphate + an acyl-CoA = a 1,2-diacyl-sn-glycero-3-phosphate + CoA. Functionally, converts lysophosphatidic acid (LPA) into phosphatidic acid by incorporating acyl moiety at the 2 position. This enzyme shows a preference for medium-chain-length fatty acyl-coenzyme a substrates. The sequence is that of 1-acyl-sn-glycerol-3-phosphate acyltransferase from Cocos nucifera (Coconut palm).